Reading from the N-terminus, the 346-residue chain is D-erythrose-4-phosphate dehydrogenase (346 aa).

11–12 (RI) is an NAD(+) binding site. Residues 163–165 (SCT), arginine 209, 222–223 (TK), and arginine 245 contribute to the substrate site. Catalysis depends on cysteine 164, which acts as the Nucleophile. An NAD(+)-binding site is contributed by asparagine 327.

Belongs to the glyceraldehyde-3-phosphate dehydrogenase family. Epd subfamily. Homotetramer.

It is found in the cytoplasm. It carries out the reaction D-erythrose 4-phosphate + NAD(+) + H2O = 4-phospho-D-erythronate + NADH + 2 H(+). It functions in the pathway cofactor biosynthesis; pyridoxine 5'-phosphate biosynthesis; pyridoxine 5'-phosphate from D-erythrose 4-phosphate: step 1/5. Functionally, catalyzes the NAD-dependent conversion of D-erythrose 4-phosphate to 4-phosphoerythronate. This chain is D-erythrose-4-phosphate dehydrogenase, found in Vibrio vulnificus (strain YJ016).